A 131-amino-acid polypeptide reads, in one-letter code: ATP synthase epsilon chain, chloroplastic (131 aa).

The protein belongs to the ATPase epsilon chain family. F-type ATPases have 2 components, CF(1) - the catalytic core - and CF(0) - the membrane proton channel. CF(1) has five subunits: alpha(3), beta(3), gamma(1), delta(1), epsilon(1). CF(0) has three main subunits: a, b and c.

It is found in the plastid. Its subcellular location is the chloroplast thylakoid membrane. Functionally, produces ATP from ADP in the presence of a proton gradient across the membrane. The protein is ATP synthase epsilon chain, chloroplastic of Guillardia theta (Cryptophyte).